Reading from the N-terminus, the 105-residue chain is Protein METHYLENE BLUE SENSITIVITY 1 (105 aa).

Residues Arg-26–Lys-46 form a disordered region. Over residues Arg-36–Lys-46 the composition is skewed to basic and acidic residues.

As to expression, mainly expressed in the epidermis.

It is found in the nucleus. The protein resides in the cytoplasm. It localises to the stress granule. In terms of biological role, required for acclimation to reactive oxygen species (ROS) responses downstream of beta-cyclocitral (beta-cc) or mediated by dihydroactinidiolide, including singlet oxygen 1O(2) detoxification reactions, especially upon light-mediated photooxidative stress, and leading to programmed cell death. Prevents leaf senescence. Involved in cold acclimation. The chain is Protein METHYLENE BLUE SENSITIVITY 1 from Arabidopsis thaliana (Mouse-ear cress).